A 392-amino-acid chain; its full sequence is Dihydroorotate dehydrogenase (quinone) (392 aa).

FMN is bound by residues 90 to 94 (AGFDK) and Thr-114. Lys-94 provides a ligand contact to substrate. 139-143 (NRMGF) serves as a coordination point for substrate. Residues Asn-173 and Asn-206 each coordinate FMN. Asn-206 contacts substrate. Ser-209 functions as the Nucleophile in the catalytic mechanism. Asn-211 provides a ligand contact to substrate. Residues Lys-243 and Val-271 each coordinate FMN. 272–273 (NT) is a binding site for substrate. Residues Gly-301, Gly-330, and 351 to 352 (YT) contribute to the FMN site.

The protein belongs to the dihydroorotate dehydrogenase family. Type 2 subfamily. Monomer. FMN serves as cofactor.

Its subcellular location is the cell membrane. It catalyses the reaction (S)-dihydroorotate + a quinone = orotate + a quinol. The protein operates within pyrimidine metabolism; UMP biosynthesis via de novo pathway; orotate from (S)-dihydroorotate (quinone route): step 1/1. In terms of biological role, catalyzes the conversion of dihydroorotate to orotate with quinone as electron acceptor. The protein is Dihydroorotate dehydrogenase (quinone) of Prochlorococcus marinus (strain MIT 9313).